The primary structure comprises 422 residues: UDP-N-acetylglucosamine 1-carboxyvinyltransferase (422 aa).

22–23 (KN) is a phosphoenolpyruvate binding site. R94 lines the UDP-N-acetyl-alpha-D-glucosamine pocket. The active-site Proton donor is the C118. At C118 the chain carries 2-(S-cysteinyl)pyruvic acid O-phosphothioketal. UDP-N-acetyl-alpha-D-glucosamine contacts are provided by residues 123–127 (RPVDL), D309, and I331.

Belongs to the EPSP synthase family. MurA subfamily.

It localises to the cytoplasm. The catalysed reaction is phosphoenolpyruvate + UDP-N-acetyl-alpha-D-glucosamine = UDP-N-acetyl-3-O-(1-carboxyvinyl)-alpha-D-glucosamine + phosphate. Its pathway is cell wall biogenesis; peptidoglycan biosynthesis. Cell wall formation. Adds enolpyruvyl to UDP-N-acetylglucosamine. This is UDP-N-acetylglucosamine 1-carboxyvinyltransferase from Cereibacter sphaeroides (strain ATCC 17029 / ATH 2.4.9) (Rhodobacter sphaeroides).